The primary structure comprises 1167 residues: Carbamoyl phosphate synthase large chain (1167 aa).

The carboxyphosphate synthetic domain stretch occupies residues 1-455; that stretch reads MPRRTDIKSI…SLQKALRGLE (455 aa). Residues R129, R221, G227, G228, E260, V262, E267, G293, V294, H295, Q337, and E351 each contribute to the ATP site. In terms of domain architecture, ATP-grasp 1 spans 184-380; sequence LETRWNLGEG…IAKIAAKLAV (197 aa). Positions 337, 351, and 353 each coordinate Mg(2+). Mn(2+)-binding residues include Q337, E351, and N353. An oligomerization domain region spans residues 456–619; it reads TGLTGLDEIE…PFAGALANEA (164 aa). The segment at 620 to 1031 is carbamoyl phosphate synthetic domain; sequence QVSSRKKVVI…AFAKSQLGAG (412 aa). Residues 748–960 enclose the ATP-grasp 2 domain; sequence QKLLHKLGLS…IAKIAARIMA (213 aa). Residues R784, T844, L846, E851, G876, I877, H878, S879, Q919, and E931 each coordinate ATP. Positions 919, 931, and 933 each coordinate Mg(2+). The Mn(2+) site is built by Q919, E931, and N933. In terms of domain architecture, MGS-like spans 1032–1167; it reads VDLPRSGTLF…EVRPLQEYFA (136 aa). Positions 1032 to 1167 are allosteric domain; it reads VDLPRSGTLF…EVRPLQEYFA (136 aa).

The protein belongs to the CarB family. In terms of assembly, composed of two chains; the small (or glutamine) chain promotes the hydrolysis of glutamine to ammonia, which is used by the large (or ammonia) chain to synthesize carbamoyl phosphate. Tetramer of heterodimers (alpha,beta)4. Requires Mg(2+) as cofactor. Mn(2+) serves as cofactor.

It catalyses the reaction hydrogencarbonate + L-glutamine + 2 ATP + H2O = carbamoyl phosphate + L-glutamate + 2 ADP + phosphate + 2 H(+). The catalysed reaction is hydrogencarbonate + NH4(+) + 2 ATP = carbamoyl phosphate + 2 ADP + phosphate + 2 H(+). Its pathway is amino-acid biosynthesis; L-arginine biosynthesis; carbamoyl phosphate from bicarbonate: step 1/1. The protein operates within pyrimidine metabolism; UMP biosynthesis via de novo pathway; (S)-dihydroorotate from bicarbonate: step 1/3. Functionally, large subunit of the glutamine-dependent carbamoyl phosphate synthetase (CPSase). CPSase catalyzes the formation of carbamoyl phosphate from the ammonia moiety of glutamine, carbonate, and phosphate donated by ATP, constituting the first step of 2 biosynthetic pathways, one leading to arginine and/or urea and the other to pyrimidine nucleotides. The large subunit (synthetase) binds the substrates ammonia (free or transferred from glutamine from the small subunit), hydrogencarbonate and ATP and carries out an ATP-coupled ligase reaction, activating hydrogencarbonate by forming carboxy phosphate which reacts with ammonia to form carbamoyl phosphate. This chain is Carbamoyl phosphate synthase large chain, found in Mesorhizobium japonicum (strain LMG 29417 / CECT 9101 / MAFF 303099) (Mesorhizobium loti (strain MAFF 303099)).